A 73-amino-acid chain; its full sequence is Antimicrobial peptide 6 (73 aa).

Positions 1–22 (MQIKHLITLFFLVLIVADQCSA) are cleaved as a signal peptide. The propeptide occupies 45 to 73 (EISTQIDQYRNLQKREAELEELLDRLPMY).

The protein belongs to the non-disulfide-bridged peptide (NDBP) superfamily. Short antimicrobial peptide (group 4) family. As to expression, expressed by the venom gland.

The protein resides in the secreted. Functionally, antibacterial peptide. The chain is Antimicrobial peptide 6 from Tityus costatus (Brazilian scorpion).